We begin with the raw amino-acid sequence, 35 residues long: Cupiennin-2b (35 aa).

The residue at position 35 (Q35) is a Glutamine amide.

As to expression, expressed by the venom gland.

It is found in the secreted. In Cupiennius salei (American wandering spider), this protein is Cupiennin-2b.